The following is a 308-amino-acid chain: Glutaminase 1 (308 aa).

The substrate site is built by S64, N116, E161, N168, Y192, Y244, and V262.

It belongs to the glutaminase family. In terms of assembly, homotetramer.

It carries out the reaction L-glutamine + H2O = L-glutamate + NH4(+). This is Glutaminase 1 from Halalkalibacterium halodurans (strain ATCC BAA-125 / DSM 18197 / FERM 7344 / JCM 9153 / C-125) (Bacillus halodurans).